We begin with the raw amino-acid sequence, 467 residues long: Siroheme synthase (467 aa).

The precorrin-2 dehydrogenase /sirohydrochlorin ferrochelatase stretch occupies residues 1 to 203 (METLPIFMKL…GQEEAARHAM (203 aa)). NAD(+) is bound by residues 22 to 23 (EI) and 43 to 44 (PE). Phosphoserine is present on S128. The interval 216–467 (GEVYLVGGGP…APSPEVVSAG (252 aa)) is uroporphyrinogen-III C-methyltransferase. P225 serves as a coordination point for S-adenosyl-L-methionine. D248 functions as the Proton acceptor in the catalytic mechanism. The active-site Proton donor is the K270. S-adenosyl-L-methionine contacts are provided by residues 301–303 (GGD), I306, 331–332 (TA), M383, and G412.

This sequence in the N-terminal section; belongs to the precorrin-2 dehydrogenase / sirohydrochlorin ferrochelatase family. In the C-terminal section; belongs to the precorrin methyltransferase family.

The catalysed reaction is uroporphyrinogen III + 2 S-adenosyl-L-methionine = precorrin-2 + 2 S-adenosyl-L-homocysteine + H(+). It carries out the reaction precorrin-2 + NAD(+) = sirohydrochlorin + NADH + 2 H(+). The enzyme catalyses siroheme + 2 H(+) = sirohydrochlorin + Fe(2+). The protein operates within cofactor biosynthesis; adenosylcobalamin biosynthesis; precorrin-2 from uroporphyrinogen III: step 1/1. It functions in the pathway cofactor biosynthesis; adenosylcobalamin biosynthesis; sirohydrochlorin from precorrin-2: step 1/1. It participates in porphyrin-containing compound metabolism; siroheme biosynthesis; precorrin-2 from uroporphyrinogen III: step 1/1. Its pathway is porphyrin-containing compound metabolism; siroheme biosynthesis; siroheme from sirohydrochlorin: step 1/1. The protein operates within porphyrin-containing compound metabolism; siroheme biosynthesis; sirohydrochlorin from precorrin-2: step 1/1. In terms of biological role, multifunctional enzyme that catalyzes the SAM-dependent methylations of uroporphyrinogen III at position C-2 and C-7 to form precorrin-2 via precorrin-1. Then it catalyzes the NAD-dependent ring dehydrogenation of precorrin-2 to yield sirohydrochlorin. Finally, it catalyzes the ferrochelation of sirohydrochlorin to yield siroheme. The protein is Siroheme synthase of Methylobacillus flagellatus (strain ATCC 51484 / DSM 6875 / VKM B-1610 / KT).